The sequence spans 156 residues: ATP synthase subunit b (156 aa).

The chain crosses the membrane as a helical span at residues 5-25; sequence LTMIGQAIAFFIFVVFCMKYV.

Belongs to the ATPase B chain family. As to quaternary structure, F-type ATPases have 2 components, F(1) - the catalytic core - and F(0) - the membrane proton channel. F(1) has five subunits: alpha(3), beta(3), gamma(1), delta(1), epsilon(1). F(0) has three main subunits: a(1), b(2) and c(10-14). The alpha and beta chains form an alternating ring which encloses part of the gamma chain. F(1) is attached to F(0) by a central stalk formed by the gamma and epsilon chains, while a peripheral stalk is formed by the delta and b chains.

The protein resides in the cell inner membrane. Functionally, f(1)F(0) ATP synthase produces ATP from ADP in the presence of a proton or sodium gradient. F-type ATPases consist of two structural domains, F(1) containing the extramembraneous catalytic core and F(0) containing the membrane proton channel, linked together by a central stalk and a peripheral stalk. During catalysis, ATP synthesis in the catalytic domain of F(1) is coupled via a rotary mechanism of the central stalk subunits to proton translocation. Component of the F(0) channel, it forms part of the peripheral stalk, linking F(1) to F(0). In Hahella chejuensis (strain KCTC 2396), this protein is ATP synthase subunit b.